The chain runs to 192 residues: uncharacterized protein (192 aa).

The signal sequence occupies residues 1–17 (MFLHLILLAGLAPVVYL).

This is an uncharacterized protein from Caenorhabditis elegans.